The chain runs to 141 residues: Nucleoside diphosphate kinase (141 aa).

K11, F59, R87, T93, R104, and N114 together coordinate ATP. H117 serves as the catalytic Pros-phosphohistidine intermediate.

This sequence belongs to the NDK family. Homotetramer. Requires Mg(2+) as cofactor.

It localises to the cytoplasm. It catalyses the reaction a 2'-deoxyribonucleoside 5'-diphosphate + ATP = a 2'-deoxyribonucleoside 5'-triphosphate + ADP. The catalysed reaction is a ribonucleoside 5'-diphosphate + ATP = a ribonucleoside 5'-triphosphate + ADP. Its function is as follows. Major role in the synthesis of nucleoside triphosphates other than ATP. The ATP gamma phosphate is transferred to the NDP beta phosphate via a ping-pong mechanism, using a phosphorylated active-site intermediate. The protein is Nucleoside diphosphate kinase of Neisseria meningitidis serogroup A / serotype 4A (strain DSM 15465 / Z2491).